The sequence spans 166 residues: Lutropin subunit beta (166 aa).

The first 21 residues, 1-21, serve as a signal peptide directing secretion; the sequence is MGGAQVLLLLTLLGTPLVTHG. 6 cysteine pairs are disulfide-bonded: Cys56–Cys104, Cys70–Cys119, Cys73–Cys157, Cys81–Cys135, Cys85–Cys137, and Cys140–Cys147. A glycan (N-linked (GlcNAc...) asparagine) is linked at Asn60.

The protein belongs to the glycoprotein hormones subunit beta family. Heterodimer of a common alpha chain and a unique beta chain which confers biological specificity to thyrotropin, lutropin, follitropin and gonadotropin.

The protein localises to the secreted. Promotes spermatogenesis and ovulation by stimulating the testes and ovaries to synthesize steroids. The chain is Lutropin subunit beta (LHB) from Coturnix japonica (Japanese quail).